Reading from the N-terminus, the 2108-residue chain is Kinesin-like protein KIF26B (2108 aa).

Disordered regions lie at residues 1–124 (MNSV…PGSD) and 263–287 (KHGSKPSSLGVSNGAEKKSGSPTHQ). Positions 40-50 (WYRKAYEESRA) are enriched in basic and acidic residues. Residues 58-98 (GAGSALGSSGTPSPGSGTSSPSSFTGSPGPASPGIGTSSPG) show a composition bias toward low complexity. The segment covering 99–120 (SLGGSPGFGTGSPGSGSGGGSS) has biased composition (gly residues). The region spanning 450–801 (KVKVMLRICS…IQIASRVLRM (352 aa)) is the Kinesin motor domain. 546–553 (GHAKLGKS) provides a ligand contact to ATP. 7 disordered regions span residues 805–825 (KTKYTSSSSGGESSCEEGRMR), 876–917 (SDKE…GKSE), 937–1166 (DGSE…ESKK), 1406–1504 (EPEA…PVTD), 1519–1653 (GLAT…SSSK), 1685–1799 (AESL…ASKL), and 1824–1974 (RAGP…WVDG). Over residues 1004–1046 (SHSPVPAAAPAHSPSPASPRSVPGSSSQHSASPLVQSPSLQSS) the composition is skewed to low complexity. The segment covering 1424-1461 (RESKENSAKKEMKFEDPWLKREEEVKKETAHPNEEGMM) has biased composition (basic and acidic residues). Residues 1491–1500 (SSSSGEVSAS) show a composition bias toward low complexity. 2 stretches are compositionally biased toward polar residues: residues 1521–1537 (ATQSPVHPNKSVKSSSL) and 1611–1628 (RASPQHSASGSGTSSPLN). Low complexity-rich tracts occupy residues 1713 to 1730 (SAGTSPPSSGASPKAGQS) and 1751 to 1763 (STTKTLSFSTKSL). Residues 1781–1795 (PWSTQSLSRNRSSGL) show a composition bias toward polar residues. The segment covering 1824-1836 (RAGPEAEARGGAL) has biased composition (low complexity). Threonine 1855 is subject to Phosphothreonine. Composition is skewed to polar residues over residues 1866–1875 (GHGSDNSSVL) and 1907–1925 (ATGSASSAQDSTSENSSSV). Over residues 1930–1948 (RSLKTPKKRSNPGSQRRRL) the composition is skewed to basic residues. Polar residues predominate over residues 1954-1968 (LDTSSPVRKPPNSTG). Position 1958 is a phosphoserine (serine 1958).

Belongs to the TRAFAC class myosin-kinesin ATPase superfamily. Kinesin family. KIF26 subfamily. As to quaternary structure, interacts with MYH10. Post-translationally, phosphorylation at Thr-1855 and Ser-1958 by CDKs, mainly CDK2 and CDK5, enhances the interaction with NEDD4, polyubiquitination, and subsequent proteasomal degradation. Phosphorylation occurs upon loss of interaction with microtubules. In terms of processing, polyubiquitinated by NEDD4, resulting in proteasomal degradation.

It is found in the cytoplasm. The protein localises to the cytoskeleton. In terms of biological role, essential for embryonic kidney development. Plays an important role in the compact adhesion between mesenchymal cells adjacent to the ureteric buds, possibly by interacting with MYH10. This could lead to the establishment of the basolateral integrity of the mesenchyme and the polarized expression of ITGA8, which maintains the GDNF expression required for further ureteric bud attraction. Although it seems to lack ATPase activity it is constitutively associated with microtubules. This is Kinesin-like protein KIF26B (KIF26B) from Homo sapiens (Human).